The sequence spans 453 residues: Protein vestigial (453 aa).

Residues 145 to 279 (AAGHSLHSSH…GGGLAGSGQG (135 aa)) form a disordered region. The segment covering 151-177 (HSSHRTHAHSLAHAHTHPHSHTHTHTH) has biased composition (basic residues). Basic and acidic residues predominate over residues 178–193 (QTKEEDLIVPRSEAEA). 2 stretches are compositionally biased toward gly residues: residues 227 to 253 (HGGG…GGTG) and 267 to 278 (GSGGGGLAGSGQ). Positions 279–335 (GQAQYLSASCVVFTNYSGDTASQVDEHFSRALNYNNKDSKESSSPMSNRNFPPSFWN) are ser-rich sd binding domain.

In terms of assembly, the Ser-rich protein domain within the C-terminal region interacts with the C-terminus of sd to form a complex which acts as a selector for wing development. Interacts with Dhfr. In terms of tissue distribution, expressed in the developing wing primordia initially along the D/V wing boundary, and by the late third larval instar, maximal expression is seen in cells at the D/V wing disk boundary. Less expression is seen in cells located farther from this boundary.

It is found in the nucleus. In terms of biological role, involved in determining which thoracic imaginal disk cells will form wings and halteres, perhaps by interacting with other nuclear regulatory proteins. When in combination with scalloped (sd), it acts as a transcriptional activation complex that regulates gene expression in the wing. Binding to sd switches the DNA target selectivity of sd. Required and sufficient for cell proliferation at the dorsal/ventral (D/V) boundary of the wing imaginal disk. Also required for cell proliferation in the wing imaginal disk, mediated via activation of E2f. By interacting with Dhfr, may control genes involved in DNA replication. This Drosophila melanogaster (Fruit fly) protein is Protein vestigial (vg).